Consider the following 570-residue polypeptide: Sorting nexin-41 (570 aa).

2 disordered regions span residues 1 to 31 and 81 to 115; these read MSDFEDNNPFAGADRRDSVSSDATDDGPSAS and FDDGSNSFSATPTASITNQNDTAHEATNERTTTAS. Positions 84–101 are enriched in polar residues; the sequence is GSNSFSATPTASITNQND. One can recognise a PX domain in the interval 98–236; that stretch reads NQNDTAHEAT…RFLDPHASWS (139 aa). R153, S155, K179, and R202 together coordinate a 1,2-diacyl-sn-glycero-3-phospho-(1D-myo-inositol-3-phosphate). Residues 429–498 are disordered; sequence DSQRINDALG…ASRRQGIGKT (70 aa). Over residues 440–454 the composition is skewed to polar residues; sequence TRSNNGPSTTNSGEQ. The span at 455-464 shows a compositional bias: low complexity; that stretch reads PSASPAPKKS.

The protein belongs to the sorting nexin family.

It is found in the endosome membrane. The protein localises to the endomembrane system. In terms of biological role, may be required for cytoplasm to vacuole transport (Cvt) and pexophagy. The sequence is that of Sorting nexin-41 (SNX41) from Yarrowia lipolytica (strain CLIB 122 / E 150) (Yeast).